Reading from the N-terminus, the 166-residue chain is Probable DHNTP pyrophosphohydrolase (166 aa).

The 125-residue stretch at 42–166 (DLQLSASALV…FKKYYRYKNI (125 aa)) folds into the Nudix hydrolase domain. The short motif at 73–94 (GHVELKESPLDTAIREFHEETG) is the Nudix box element. Residues glutamate 88 and glutamate 92 each contribute to the Mg(2+) site.

Belongs to the Nudix hydrolase family. Monomer. Mg(2+) serves as cofactor.

Its pathway is cofactor biosynthesis; tetrahydrofolate biosynthesis; 2-amino-4-hydroxy-6-hydroxymethyl-7,8-dihydropteridine diphosphate from 7,8-dihydroneopterin triphosphate: step 1/4. Functionally, probably mediates the removal of pyrophosphate from dihydroneopterin triphosphate (DHNTP), a possible step in the pterin branch of the folate synthesis pathway. This Lactococcus lactis subsp. cremoris (strain MG1363) protein is Probable DHNTP pyrophosphohydrolase (folQ).